The sequence spans 434 residues: Serine--tRNA ligase (434 aa).

Residue 239–241 (TAE) coordinates L-serine. 270-272 (RSE) is an ATP binding site. Glu-293 lines the L-serine pocket. 357–360 (EISS) serves as a coordination point for ATP. Ser-393 contributes to the L-serine binding site.

This sequence belongs to the class-II aminoacyl-tRNA synthetase family. Type-1 seryl-tRNA synthetase subfamily. Homodimer. The tRNA molecule binds across the dimer.

It localises to the cytoplasm. It carries out the reaction tRNA(Ser) + L-serine + ATP = L-seryl-tRNA(Ser) + AMP + diphosphate + H(+). The catalysed reaction is tRNA(Sec) + L-serine + ATP = L-seryl-tRNA(Sec) + AMP + diphosphate + H(+). The protein operates within aminoacyl-tRNA biosynthesis; selenocysteinyl-tRNA(Sec) biosynthesis; L-seryl-tRNA(Sec) from L-serine and tRNA(Sec): step 1/1. Functionally, catalyzes the attachment of serine to tRNA(Ser). Is also able to aminoacylate tRNA(Sec) with serine, to form the misacylated tRNA L-seryl-tRNA(Sec), which will be further converted into selenocysteinyl-tRNA(Sec). This is Serine--tRNA ligase from Pseudoalteromonas translucida (strain TAC 125).